Reading from the N-terminus, the 98-residue chain is Integration host factor subunit alpha (98 aa).

Residues 54 to 74 (LRDKSSRPGRNPKTGESVPVS) form a disordered region.

The protein belongs to the bacterial histone-like protein family. In terms of assembly, heterodimer of an alpha and a beta chain.

This protein is one of the two subunits of integration host factor, a specific DNA-binding protein that functions in genetic recombination as well as in transcriptional and translational control. This Pasteurella multocida (strain Pm70) protein is Integration host factor subunit alpha (ihfA).